The chain runs to 286 residues: Acetyl-coenzyme A carboxylase carboxyl transferase subunit beta (286 aa).

The CoA carboxyltransferase N-terminal domain occupies 28–286 (LMQKCSNCKK…KMHMDGRQLK (259 aa)). Zn(2+)-binding residues include cysteine 32, cysteine 35, cysteine 51, and cysteine 54. The segment at 32–54 (CSNCKKIYYRKEMVKALQVCPNC) adopts a C4-type zinc-finger fold.

The protein belongs to the AccD/PCCB family. In terms of assembly, acetyl-CoA carboxylase is a heterohexamer composed of biotin carboxyl carrier protein (AccB), biotin carboxylase (AccC) and two subunits each of ACCase subunit alpha (AccA) and ACCase subunit beta (AccD). Zn(2+) serves as cofactor.

The protein localises to the cytoplasm. It carries out the reaction N(6)-carboxybiotinyl-L-lysyl-[protein] + acetyl-CoA = N(6)-biotinyl-L-lysyl-[protein] + malonyl-CoA. Its pathway is lipid metabolism; malonyl-CoA biosynthesis; malonyl-CoA from acetyl-CoA: step 1/1. Its function is as follows. Component of the acetyl coenzyme A carboxylase (ACC) complex. Biotin carboxylase (BC) catalyzes the carboxylation of biotin on its carrier protein (BCCP) and then the CO(2) group is transferred by the transcarboxylase to acetyl-CoA to form malonyl-CoA. In Oceanobacillus iheyensis (strain DSM 14371 / CIP 107618 / JCM 11309 / KCTC 3954 / HTE831), this protein is Acetyl-coenzyme A carboxylase carboxyl transferase subunit beta.